The sequence spans 233 residues: Tropomyosin (233 aa).

Residues 6–222 (FDTVNEKYQE…KERYKAISDE (217 aa)) are a coiled coil. A disordered region spans residues 48–88 (MERSEERLQTATEKLEEASKAADESERNRKVLENLNNASEE). Positions 51-79 (SEERLQTATEKLEEASKAADESERNRKVL) are enriched in basic and acidic residues.

Belongs to the tropomyosin family. In terms of assembly, homodimer.

Tropomyosin, in association with the troponin complex, plays a central role in the calcium dependent regulation of muscle contraction. This is Tropomyosin from Magallana gigas (Pacific oyster).